We begin with the raw amino-acid sequence, 41 residues long: Large ribosomal subunit protein bL36 (41 aa).

Belongs to the bacterial ribosomal protein bL36 family.

This is Large ribosomal subunit protein bL36 from Phenylobacterium zucineum (strain HLK1).